Reading from the N-terminus, the 359-residue chain is Innexin inx2 (359 aa).

Residues 1-22 lie on the Cytoplasmic side of the membrane; the sequence is MFDVFGSVKGLLKLDSVCIDNN. A helical membrane pass occupies residues 23–43; sequence LFRLHYKATVIILIAFSLLVT. The Extracellular segment spans residues 44-109; it reads SRQYIGDPID…KDEVKYHKYY (66 aa). The chain crosses the membrane as a helical span at residues 110–130; sequence QWVCFVLFFQAILFYIPRYLW. Residues 131–180 are Cytoplasmic-facing; the sequence is KTWEGGRIKMLVLDLNSPVVNEQSKADRKKLLVDYFATNLHTQNFYAYRF. Residues 181–201 traverse the membrane as a helical segment; the sequence is FICEALNFVNVVGQIYFMDLF. Residues 202–266 are Extracellular-facing; that stretch reads LDGEFTTYGS…VLPLNIVNEK (65 aa). The helical transmembrane segment at 267–287 threads the bilayer; it reads IYVFLWFWFVILSVLTGIGLV. Residues 288–359 are Cytoplasmic-facing; that stretch reads YRLATAMGPQ…AKKLEGKEIV (72 aa).

The protein belongs to the pannexin family. In terms of tissue distribution, widespread expression in embryo, in anterior and posterior row of neural precursors, midline precursors and in epithelial sheet of stomodeum.

The protein localises to the cell membrane. The protein resides in the cell junction. It localises to the gap junction. Functionally, structural components of the gap junctions. This chain is Innexin inx2 (inx2), found in Schistocerca americana (American grasshopper).